A 218-amino-acid polypeptide reads, in one-letter code: Octanoyltransferase (218 aa).

In terms of domain architecture, BPL/LPL catalytic spans 45–218 (AGTADELWLL…TDALQRAIYS (174 aa)). Residues 84–91 (RGGQITYH), 151–153 (ALG), and 164–166 (GLA) contribute to the substrate site. Catalysis depends on Cys182, which acts as the Acyl-thioester intermediate.

Belongs to the LipB family.

The protein resides in the cytoplasm. The catalysed reaction is octanoyl-[ACP] + L-lysyl-[protein] = N(6)-octanoyl-L-lysyl-[protein] + holo-[ACP] + H(+). The protein operates within protein modification; protein lipoylation via endogenous pathway; protein N(6)-(lipoyl)lysine from octanoyl-[acyl-carrier-protein]: step 1/2. Functionally, catalyzes the transfer of endogenously produced octanoic acid from octanoyl-acyl-carrier-protein onto the lipoyl domains of lipoate-dependent enzymes. Lipoyl-ACP can also act as a substrate although octanoyl-ACP is likely to be the physiological substrate. This chain is Octanoyltransferase, found in Thiobacillus denitrificans (strain ATCC 25259 / T1).